Here is an 884-residue protein sequence, read N- to C-terminus: Valine--tRNA ligase (884 aa).

The short motif at 47 to 57 is the 'HIGH' region element; sequence PNVTGALHIGH. The 'KMSKS' region motif lies at 525 to 529; the sequence is KMSKS. Lysine 528 contacts ATP. A coiled-coil region spans residues 812–884; that stretch reads AVDFEAELAR…QQRFRDAIGK (73 aa).

The protein belongs to the class-I aminoacyl-tRNA synthetase family. ValS type 1 subfamily. Monomer.

Its subcellular location is the cytoplasm. It carries out the reaction tRNA(Val) + L-valine + ATP = L-valyl-tRNA(Val) + AMP + diphosphate. Catalyzes the attachment of valine to tRNA(Val). As ValRS can inadvertently accommodate and process structurally similar amino acids such as threonine, to avoid such errors, it has a 'posttransfer' editing activity that hydrolyzes mischarged Thr-tRNA(Val) in a tRNA-dependent manner. The protein is Valine--tRNA ligase of Nitratidesulfovibrio vulgaris (strain ATCC 29579 / DSM 644 / CCUG 34227 / NCIMB 8303 / VKM B-1760 / Hildenborough) (Desulfovibrio vulgaris).